An 836-amino-acid polypeptide reads, in one-letter code: General negative regulator of transcription subunit 3 (836 aa).

Coiled-coil stretches lie at residues 36–68 (NNPSQKDKLESDLKREVKKLQRLREQIKSWQSS), 119–195 (RERR…ANEE), and 255–292 (NTSDANESLQDISKLSKKEQRKLEREAKKAAKLAAKNA). A compositionally biased stretch (polar residues) spans 252–267 (EDNNTSDANESLQDIS). Disordered regions lie at residues 252–284 (EDNNTSDANESLQDISKLSKKEQRKLEREAKKA), 296–391 (AIPV…LKPA), 410–471 (AVEK…NTGA), and 513–532 (NPKSEHEVATTVNQNGPENT). Residues 268 to 283 (KLSKKEQRKLEREAKK) are compositionally biased toward basic and acidic residues. 3 positions are modified to phosphoserine: Ser303, Ser307, and Ser322. Residues 341–386 (SIKSPRSSADNLLPSLQKSPSSATPETPTNVHTHIHQTPNGITGAT) show a composition bias toward polar residues. Over residues 418 to 446 (TSASSTISNTSTKTPTTAAATTTSSNANS) the composition is skewed to low complexity. Phosphoserine is present on residues Ser446 and Ser450. Composition is skewed to polar residues over residues 447–468 (RIGSALNTPKLSTSSLSLQPDN) and 522–531 (TTVNQNGPEN). A Glycyl lysine isopeptide (Lys-Gly) (interchain with G-Cter in ubiquitin) cross-link involves residue Lys535. The disordered stretch occupies residues 537–583 (MEQKEEESPEERNKLQVPTFGVFDDDFESDRDSETEPEEEEQPSTPK). Residues 559–578 (FDDDFESDRDSETEPEEEEQ) show a composition bias toward acidic residues. Ser565 and Ser569 each carry phosphoserine. Thr571 is subject to Phosphothreonine. Ser657 bears the Phosphoserine mark. The stretch at 803 to 831 (NVNDQSNVTLEQQKQEISHGKQLLKQLKQ) forms a coiled coil.

Belongs to the CNOT2/3/5 family. Forms a NOT protein complex that comprises NOT1, NOT2, NOT3, NOT4 and NOT5. Subunit of the 1.0 MDa CCR4-NOT core complex that contains CCR4, CAF1, NOT1, NOT2, NOT3, NOT4, NOT5, CAF40 and CAF130. The core complex probably is part of a less characterized 1.9 MDa CCR4-NOT complex.

The protein localises to the cytoplasm. It localises to the nucleus. Acts as a component of the CCR4-NOT core complex, which in the nucleus seems to be a general transcription factor, and in the cytoplasm the major mRNA deadenylase involved in mRNA turnover. The NOT protein subcomplex negatively regulates the basal and activated transcription of many genes. Preferentially affects TC-type TATA element-dependent transcription. Could directly or indirectly inhibit component(s) of the general transcription machinery. The polypeptide is General negative regulator of transcription subunit 3 (NOT3) (Saccharomyces cerevisiae (strain ATCC 204508 / S288c) (Baker's yeast)).